A 133-amino-acid chain; its full sequence is MDVFMKGLSMAKEGVVAAAEKTKQGVTEAAEKTKEGVLYVGSKTSGVVQGVASVAEKTKEQASHLGGAVFSGAGNIAAATGLVKKEEFPTDLKPEEVAQEAAEEPLIEPLMEPEGESYEDSPQEEYQEYEPEA.

Tandem repeats lie at residues 20–30 (EKTKQGVTEAA) and 31–41 (EKTKEGVLYVG). Positions 20 to 66 (EKTKQGVTEAAEKTKEGVLYVGSKTSGVVQGVASVAEKTKEQASHLG) are 4 X 11 AA tandem repeats of [EGS]-K-T-K-[EQ]-[GQ]-V-X(4). A 3; approximate repeat occupies 42 to 55 (SKTSGVVQGVASVA). The residue at position 45 (Ser45) is a Phosphoserine. The stretch at 56-66 (EKTKEQASHLG) is repeat 4. A disordered region spans residues 96 to 133 (EVAQEAAEEPLIEPLMEPEGESYEDSPQEEYQEYEPEA). The span at 97–133 (VAQEAAEEPLIEPLMEPEGESYEDSPQEEYQEYEPEA) shows a compositional bias: acidic residues. Ser117 bears the Phosphoserine; by BARK1, CK2 and GRK5 mark.

The protein belongs to the synuclein family. Post-translationally, phosphorylated. Phosphorylation by G-protein coupled receptor kinases (GRK) is more efficient than phosphorylation by CK1, CK2 and CaM-kinase II. In terms of tissue distribution, highly expressed in the brain.

The protein localises to the cytoplasm. Its function is as follows. May be involved in neuronal plasticity. The chain is Beta-synuclein (Sncb) from Mus musculus (Mouse).